A 91-amino-acid chain; its full sequence is ATP synthase subunit c (91 aa).

Helical transmembrane passes span 4-24 and 53-73; these read FTMC…GTGI and IGLA…LIIL.

This sequence belongs to the ATPase C chain family. F-type ATPases have 2 components, F(1) - the catalytic core - and F(0) - the membrane proton channel. F(1) has five subunits: alpha(3), beta(3), gamma(1), delta(1), epsilon(1). F(0) has three main subunits: a(1), b(2) and c(10-14). The alpha and beta chains form an alternating ring which encloses part of the gamma chain. F(1) is attached to F(0) by a central stalk formed by the gamma and epsilon chains, while a peripheral stalk is formed by the delta and b chains.

Its subcellular location is the cell inner membrane. F(1)F(0) ATP synthase produces ATP from ADP in the presence of a proton or sodium gradient. F-type ATPases consist of two structural domains, F(1) containing the extramembraneous catalytic core and F(0) containing the membrane proton channel, linked together by a central stalk and a peripheral stalk. During catalysis, ATP synthesis in the catalytic domain of F(1) is coupled via a rotary mechanism of the central stalk subunits to proton translocation. In terms of biological role, key component of the F(0) channel; it plays a direct role in translocation across the membrane. A homomeric c-ring of between 10-14 subunits forms the central stalk rotor element with the F(1) delta and epsilon subunits. This Trichlorobacter lovleyi (strain ATCC BAA-1151 / DSM 17278 / SZ) (Geobacter lovleyi) protein is ATP synthase subunit c.